We begin with the raw amino-acid sequence, 439 residues long: Ribosomal protein uS12 methylthiotransferase RimO (439 aa).

An MTTase N-terminal domain is found at 5 to 117 (KKLHLISLGC…IDELIASKQS (113 aa)). [4Fe-4S] cluster contacts are provided by Cys-14, Cys-48, Cys-80, Cys-149, Cys-153, and Cys-156. In terms of domain architecture, Radical SAM core spans 135–363 (TGSNYHAYIK…GEIAERSTLR (229 aa)). The 72-residue stretch at 366–437 (EKMVGKTVEL…GMQLLATLIK (72 aa)) folds into the TRAM domain.

The protein belongs to the methylthiotransferase family. RimO subfamily. It depends on [4Fe-4S] cluster as a cofactor.

Its subcellular location is the cytoplasm. The catalysed reaction is L-aspartate(89)-[ribosomal protein uS12]-hydrogen + (sulfur carrier)-SH + AH2 + 2 S-adenosyl-L-methionine = 3-methylsulfanyl-L-aspartate(89)-[ribosomal protein uS12]-hydrogen + (sulfur carrier)-H + 5'-deoxyadenosine + L-methionine + A + S-adenosyl-L-homocysteine + 2 H(+). Its function is as follows. Catalyzes the methylthiolation of an aspartic acid residue of ribosomal protein uS12. The polypeptide is Ribosomal protein uS12 methylthiotransferase RimO (Sulfurovum sp. (strain NBC37-1)).